The sequence spans 715 residues: Fatty acid oxidation complex subunit alpha (715 aa).

The interval 1 to 190 (MTTTSAFMLN…KAGLVDDVVP (190 aa)) is enoyl-CoA hydratase. Residues 306 to 715 (GPLNSVGILG…WTNGETDQGN (410 aa)) form a 3-hydroxyacyl-CoA dehydrogenase region.

This sequence in the N-terminal section; belongs to the enoyl-CoA hydratase/isomerase family. The protein in the central section; belongs to the 3-hydroxyacyl-CoA dehydrogenase family. As to quaternary structure, heterotetramer of two alpha chains (FadJ) and two beta chains (FadI).

It localises to the cytoplasm. The catalysed reaction is a (3S)-3-hydroxyacyl-CoA = a (2E)-enoyl-CoA + H2O. It catalyses the reaction a 4-saturated-(3S)-3-hydroxyacyl-CoA = a (3E)-enoyl-CoA + H2O. It carries out the reaction a (3S)-3-hydroxyacyl-CoA + NAD(+) = a 3-oxoacyl-CoA + NADH + H(+). The enzyme catalyses (3S)-3-hydroxybutanoyl-CoA = (3R)-3-hydroxybutanoyl-CoA. The protein operates within lipid metabolism; fatty acid beta-oxidation. Catalyzes the formation of a hydroxyacyl-CoA by addition of water on enoyl-CoA. Also exhibits 3-hydroxyacyl-CoA epimerase and 3-hydroxyacyl-CoA dehydrogenase activities. The polypeptide is Fatty acid oxidation complex subunit alpha (Salmonella dublin (strain CT_02021853)).